The primary structure comprises 233 residues: Mediator of RNA polymerase II transcription subunit 7 (233 aa).

A Glycyl lysine isopeptide (Lys-Gly) (interchain with G-Cter in SUMO1); alternate cross-link involves residue Lys185. A Glycyl lysine isopeptide (Lys-Gly) (interchain with G-Cter in SUMO2); alternate cross-link involves residue Lys185. Positions 185-213 (KTEPMDTDDSNNCIGQNEQQRENSGHRRD) are disordered. Residue Ser194 is modified to Phosphoserine. Residues 203 to 213 (QQRENSGHRRD) show a composition bias toward basic and acidic residues.

This sequence belongs to the Mediator complex subunit 7 family. As to quaternary structure, component of the Mediator complex, which is composed of MED1, MED4, MED6, MED7, MED8, MED9, MED10, MED11, MED12, MED13, MED13L, MED14, MED15, MED16, MED17, MED18, MED19, MED20, MED21, MED22, MED23, MED24, MED25, MED26, MED27, MED29, MED30, MED31, CCNC, CDK8 and CDC2L6/CDK11. The MED12, MED13, CCNC and CDK8 subunits form a distinct module termed the CDK8 module. Mediator containing the CDK8 module is less active than Mediator lacking this module in supporting transcriptional activation. Individual preparations of the Mediator complex lacking one or more distinct subunits have been variously termed ARC, CRSP, DRIP, PC2, SMCC and TRAP.

It is found in the nucleus. In terms of biological role, component of the Mediator complex, a coactivator involved in the regulated transcription of nearly all RNA polymerase II-dependent genes. Mediator functions as a bridge to convey information from gene-specific regulatory proteins to the basal RNA polymerase II transcription machinery. Mediator is recruited to promoters by direct interactions with regulatory proteins and serves as a scaffold for the assembly of a functional preinitiation complex with RNA polymerase II and the general transcription factors. The chain is Mediator of RNA polymerase II transcription subunit 7 (MED7) from Bos taurus (Bovine).